The primary structure comprises 406 residues: 4-O-methyl-glucuronoyl methylesterase (406 aa).

Residues 1 to 17 form the signal peptide; it reads MAFRWLSFLLLALPVLA. Residues Cys-31 and Cys-64 are joined by a disulfide bond. 4 N-linked (GlcNAc...) asparagine glycosylation sites follow: Asn-100, Asn-110, Asn-122, and Asn-178. A GXSYXG catalytic site motif motif is present at residues 215–220; that stretch reads GCSRDG. 2 disulfides stabilise this stretch: Cys-216-Cys-352 and Cys-248-Cys-324. The Nucleophile role is filled by Ser-217. Substrate contacts are provided by Lys-221, Gln-263, and Glu-271. Asn-285 carries N-linked (GlcNAc...) asparagine glycosylation. Residue Trp-315 participates in substrate binding. Asn-348 is a glycosylation site (N-linked (GlcNAc...) asparagine). His-351 serves as the catalytic Proton donor/acceptor. N-linked (GlcNAc...) asparagine glycans are attached at residues Asn-376, Asn-387, and Asn-398.

The protein belongs to the carbohydrate esterase 15 (CE15) family.

The protein resides in the secreted. The enzyme catalyses a 4-O-methyl-alpha-D-glucuronosyl ester derivative + H2O = 4-O-methyl-alpha-D-glucuronate derivative + an alcohol + H(+). Its function is as follows. Glucuronoyl esterase which may play a significant role in biomass degradation, as it is considered to disconnect hemicellulose from lignin through the hydrolysis of the ester bond between 4-O-methyl-D-glucuronic acid residues of glucuronoxylans and aromatic alcohols of lignin. The protein is 4-O-methyl-glucuronoyl methylesterase of Phanerochaete carnosa (strain HHB-10118-sp) (White-rot fungus).